The following is a 458-amino-acid chain: Flavohemoprotein (458 aa).

A Globin domain is found at 2–158; the sequence is TLSEDTLRAV…LADLFIKREE (157 aa). His107 contributes to the heme b binding site. Active-site charge relay system residues include Tyr117 and Glu157. The segment at 169–457 is reductase; that stretch reads GGWRQTRTFR…FEMFGPFKAS (289 aa). The region spanning 172 to 279 is the FAD-binding FR-type domain; it reads RQTRTFRVEE…APPYGDFFLR (108 aa). Residues Tyr211 and 228 to 231 contribute to the FAD site; that span reads RQYS. An NADP(+)-binding site is contributed by 321-326; it reads GIGQTP. 450–453 contributes to the FAD binding site; sequence MFGP.

It belongs to the globin family. Two-domain flavohemoproteins subfamily. This sequence in the C-terminal section; belongs to the flavoprotein pyridine nucleotide cytochrome reductase family. As to quaternary structure, monomer. Requires heme b as cofactor. The cofactor is FAD.

It catalyses the reaction 2 nitric oxide + NADPH + 2 O2 = 2 nitrate + NADP(+) + H(+). It carries out the reaction 2 nitric oxide + NADH + 2 O2 = 2 nitrate + NAD(+) + H(+). Functionally, flavohemoprotein involved in nitric oxide (NO) detoxification in an aerobic process, termed nitric oxide dioxygenase (NOD) reaction that utilizes O(2) and NAD(P)H to convert NO to nitrate, which protects the protozoan parasite from various noxious nitrogen compounds. Therefore, plays a central role in the inducible response to nitrosative stress. May also be involved in O(2) detoxification. The chain is Flavohemoprotein (hmpA) from Giardia intestinalis (strain ATCC 50803 / WB clone C6) (Giardia lamblia).